Consider the following 46-residue polypeptide: U-myrmeciitoxin(01)-Mg6a (46 aa).

The signal sequence occupies residues 1–20 (MNLKTFCFFLLGIFVTLTVT). Residues 21–33 (VIPIANADAEADT) constitute a propeptide that is removed on maturation.

In terms of processing, contains 1 disulfide bond. Expressed by the venom gland.

It localises to the secreted. This chain is U-myrmeciitoxin(01)-Mg6a, found in Myrmecia gulosa (Red bulldog ant).